A 1576-amino-acid polypeptide reads, in one-letter code: eIF-2-alpha kinase GCN2 (1576 aa).

One can recognise an RWD domain in the interval 16–127 (NEIEALKAIF…SIVQDYLNDW (112 aa)). Positions 180 to 204 (QDELQRRSYETPQSSSKKKTNSKET) are disordered. 2 consecutive Protein kinase domains span residues 235–511 (VLPL…HVIR) and 556–928 (FEEL…EEFI). ATP-binding positions include 562 to 570 (LGRGGFGEV) and lysine 585. The segment at 673–714 (YNSSADEEDPEASDISFQYSNTSDKEGSSDKDSSIEEASSVK) is disordered. A compositionally biased stretch (basic and acidic residues) spans 695 to 706 (SDKEGSSDKDSS). The Proton acceptor role is filled by aspartate 772.

This sequence belongs to the protein kinase superfamily. Ser/Thr protein kinase family. GCN2 subfamily. Homodimer; homodimerization is important for kinase activation by uncharged tRNAs. Interacts (via N-terminal RWD domain) with gcn1 (via N- and C-terminus); this interaction stimulates gcn2 kinase activity in a gcn20-dependent manner in response to amino acid starvation. Interacts (via N-terminus) with the gcn1-gcn20 complex on translating ribosomes in amino acid-starved cells; gcn1 may bind near the ribosomal A-site and promotes the transfer of uncharged tRNAs from the A-site to the tRNA-binding domain in gcn2 for its subsequent kinase activation, and hence allowing fil1 translational activation and derepression of amino acid biosynthetic genes. In terms of processing, autophosphorylated.

It is found in the cytoplasm. It catalyses the reaction L-seryl-[protein] + ATP = O-phospho-L-seryl-[protein] + ADP + H(+). The enzyme catalyses L-threonyl-[protein] + ATP = O-phospho-L-threonyl-[protein] + ADP + H(+). Its activity is regulated as follows. The integrated stress response (ISR) is activated in response to conditions that promote ribosome collisions: gcn1, which acts as a ribosome collision sensor, activates gcn2. The RQC pathway and the integrated stress response (ISR) antagonize each other: hel2 prevents the activation of gcn2, while gcn2 suppresses RQC activation. Ribosome stalling-induced integrated stress response prefers ribosomes with empty A sites. The kinase activity is stimulated upon binding to uncharged tRNAs. Its function is as follows. Metabolic-stress sensing protein kinase that phosphorylates the alpha subunit of eukaryotic translation initiation factor 2 (eIF-2-alpha/SUI2) on 'Ser-52' in response to low amino acid, carbon, or purine availability. Required for adapatation to nutrient starvation by acting as a key component of the integrated stress response (ISR), by which cells alter their translational and transcriptional output in response to starvation. Converts phosphorylated eIF-2-alpha/SUI2 either to a competitive inhibitor of translation initiation factor eIF-2B, leading to a global protein synthesis repression, and thus to a reduced overall utilization of amino acids, or to a translational initiation activation of specific mRNAs, such as the transcriptional activator GCN4, and hence allowing GCN4-mediated reprogramming of transcription to alleviate nutrient depletion. Binds uncharged tRNAs. The protein is eIF-2-alpha kinase GCN2 of Schizosaccharomyces pombe (strain 972 / ATCC 24843) (Fission yeast).